The chain runs to 911 residues: Protein translocase subunit SecA (911 aa).

Residues glutamine 87, 105 to 109, and aspartate 512 contribute to the ATP site; that span reads GEGKT. The segment at 861 to 880 is disordered; that stretch reads APGLGSEQLSEEGAEVAVAS. The Zn(2+) site is built by cysteine 895, cysteine 897, cysteine 906, and histidine 907.

The protein belongs to the SecA family. Monomer and homodimer. Part of the essential Sec protein translocation apparatus which comprises SecA, SecYEG and auxiliary proteins SecDF-YajC and YidC. Zn(2+) serves as cofactor.

The protein localises to the cell inner membrane. The protein resides in the cytoplasm. It carries out the reaction ATP + H2O + cellular proteinSide 1 = ADP + phosphate + cellular proteinSide 2.. Its function is as follows. Part of the Sec protein translocase complex. Interacts with the SecYEG preprotein conducting channel. Has a central role in coupling the hydrolysis of ATP to the transfer of proteins into and across the cell membrane, serving both as a receptor for the preprotein-SecB complex and as an ATP-driven molecular motor driving the stepwise translocation of polypeptide chains across the membrane. The protein is Protein translocase subunit SecA of Pseudomonas putida (strain ATCC 47054 / DSM 6125 / CFBP 8728 / NCIMB 11950 / KT2440).